Here is a 171-residue protein sequence, read N- to C-terminus: Co-chaperone protein HscB homolog (171 aa).

The J domain maps to 2-74 (NHFELFGLPS…ISRAEYILAE (73 aa)).

Belongs to the HscB family. In terms of assembly, interacts with HscA and stimulates its ATPase activity.

Its function is as follows. Co-chaperone involved in the maturation of iron-sulfur cluster-containing proteins. Seems to help targeting proteins to be folded toward HscA. This chain is Co-chaperone protein HscB homolog, found in Vibrio campbellii (strain ATCC BAA-1116).